A 272-amino-acid chain; its full sequence is Small ribosomal subunit protein mS23 (272 aa).

The interval 236–272 is disordered; sequence AGATGGAKEESDPAILPELEVAESTSESAQPAEIRTG.

It belongs to the mitochondrion-specific ribosomal protein mS23 family. As to quaternary structure, component of the mitochondrial small ribosomal subunit.

It localises to the mitochondrion. This Coccidioides immitis (strain RS) (Valley fever fungus) protein is Small ribosomal subunit protein mS23 (RSM25).